We begin with the raw amino-acid sequence, 319 residues long: Urease accessory protein UreD (319 aa).

Residues 284–319 form a disordered region; it reads RLSTPQPPREWPLQEEGTFSNERFTKDHQSPSASPH.

This sequence belongs to the UreD family. UreD, UreF and UreG form a complex that acts as a GTP-hydrolysis-dependent molecular chaperone, activating the urease apoprotein by helping to assemble the nickel containing metallocenter of UreC. The UreE protein probably delivers the nickel.

It is found in the cytoplasm. Required for maturation of urease via the functional incorporation of the urease nickel metallocenter. This Prochlorococcus marinus (strain MIT 9313) protein is Urease accessory protein UreD.